We begin with the raw amino-acid sequence, 459 residues long: Limonoid 7-O-acetyltransferse (459 aa).

Catalysis depends on proton acceptor residues histidine 167 and aspartate 391.

The protein belongs to the plant acyltransferase family. In terms of assembly, monomer. As to expression, expressed in maturing fruits and in juice vesicles.

It carries out the reaction (1S)-1-acetoxy-luvungin A + acetyl-CoA = (1S)-1,7-diacetoxy-luvungin A + CoA. It participates in secondary metabolite biosynthesis; terpenoid biosynthesis. Acetyltransferase involved in the biosynthesis of limonoids triterpene natural products such as limonin, a compound with insecticidal activity responsible for the bitter taste in citrus. Catalyzes the formation of (1S)-1,7-diacetoxy-luvungin A from (1S)-1-acetoxy-luvungin A. This chain is Limonoid 7-O-acetyltransferse, found in Citrus sinensis (Sweet orange).